We begin with the raw amino-acid sequence, 234 residues long: LexA repressor (234 aa).

Residues 26–46 constitute a DNA-binding region (H-T-H motif); sequence FDEMKTALELTSKSGIHRLIT. Catalysis depends on for autocatalytic cleavage activity residues S155 and K193.

This sequence belongs to the peptidase S24 family. Homodimer.

It carries out the reaction Hydrolysis of Ala-|-Gly bond in repressor LexA.. Functionally, represses a number of genes involved in the response to DNA damage (SOS response), including recA and lexA. In the presence of single-stranded DNA, RecA interacts with LexA causing an autocatalytic cleavage which disrupts the DNA-binding part of LexA, leading to derepression of the SOS regulon and eventually DNA repair. This chain is LexA repressor, found in Bartonella henselae (strain ATCC 49882 / DSM 28221 / CCUG 30454 / Houston 1) (Rochalimaea henselae).